A 384-amino-acid polypeptide reads, in one-letter code: MAKHLFTSESVSEGHPDKIADQISDAVLDAILEQDPKARVACETYVKTGMVLVGGEITTSAWVDIEEITRQTVRDIGYVHSDMGFDANSCAVLSAIGKQSPDINQGVDRTDPLEQGAGDQGLMFGYATNETDVLMPAPVTYAHRLVQRQSEVRKSGALPWLRPDAKSQITFQYDDGKIVGIDAVVLSTQHAEDISQKELQEAVMEEIIKPVLPTEWINASTKYHINPTGRFVIGGPMGDCGLTGRKIIVDTYGGMARHGGGAFSGKDPSKVDRSAAYAARYVAKNIVAAGLADRCEIQVSYAIGVAEPTSIMVETFGTEKISTETLTLLVREFFDLRPHGLIQMLDLLHPIYRETAAYGHFGREHFPWEKTDKAAQLREAAGLK.

Histidine 15 is an ATP binding site. Residue aspartate 17 participates in Mg(2+) binding. K(+) is bound at residue glutamate 43. L-methionine contacts are provided by glutamate 56 and glutamine 99. Positions 99–109 (QSPDINQGVDR) are flexible loop. Residues 164-166 (DAK), 230-231 (RF), aspartate 239, 245-246 (RK), alanine 262, and lysine 266 each bind ATP. An L-methionine-binding site is contributed by aspartate 239. Residue lysine 270 participates in L-methionine binding.

The protein belongs to the AdoMet synthase family. In terms of assembly, homotetramer; dimer of dimers. Mg(2+) serves as cofactor. The cofactor is K(+).

The protein resides in the cytoplasm. The catalysed reaction is L-methionine + ATP + H2O = S-adenosyl-L-methionine + phosphate + diphosphate. The protein operates within amino-acid biosynthesis; S-adenosyl-L-methionine biosynthesis; S-adenosyl-L-methionine from L-methionine: step 1/1. Functionally, catalyzes the formation of S-adenosylmethionine (AdoMet) from methionine and ATP. The overall synthetic reaction is composed of two sequential steps, AdoMet formation and the subsequent tripolyphosphate hydrolysis which occurs prior to release of AdoMet from the enzyme. This Erwinia tasmaniensis (strain DSM 17950 / CFBP 7177 / CIP 109463 / NCPPB 4357 / Et1/99) protein is S-adenosylmethionine synthase.